Here is a 203-residue protein sequence, read N- to C-terminus: Akirin-2 (203 aa).

Ser-18 and Ser-21 each carry phosphoserine. The Nuclear localization signal signature appears at 22 to 27; it reads PKRRRC. Position 57 is a phosphoserine (Ser-57). Positions 200-203 match the SYVS motif motif; sequence SYVS.

It belongs to the akirin family. As to quaternary structure, homodimer. Interacts with IPO9; the interaction is direct. Associates (via SYVS motif) with 20S and 26S proteasomes. Interacts with SMARCD1; promoting SWI/SNF complex recruitment. Interacts with NFKBIZ. Interacts with YWHAB. Post-translationally, polyubiquitinated. Polyubiquitination is dependent of UBR5 that extends pre-ubiquitinated AKIRIN2. Widely expressed with the highest expression in peripheral blood leukocytes.

The protein resides in the nucleus. Its subcellular location is the cytoplasm. The protein localises to the membrane. Its function is as follows. Molecular adapter that acts as a bridge between a variety of multiprotein complexes, and which is involved in embryonic development, immunity, myogenesis and brain development. Plays a key role in nuclear protein degradation by promoting import of proteasomes into the nucleus: directly binds to fully assembled 20S proteasomes at one end and to nuclear import receptor IPO9 at the other end, bridging them together and mediating the import of pre-assembled proteasome complexes through the nuclear pore. Involved in innate immunity by regulating the production of interleukin-6 (IL6) downstream of Toll-like receptor (TLR): acts by bridging the NF-kappa-B inhibitor NFKBIZ and the SWI/SNF complex, leading to promote induction of IL6. Also involved in adaptive immunity by promoting B-cell activation. Involved in brain development: required for the survival and proliferation of cerebral cortical progenitor cells. Involved in myogenesis: required for skeletal muscle formation and skeletal development, possibly by regulating expression of muscle differentiation factors. Also plays a role in facilitating interdigital tissue regression during limb development. In Homo sapiens (Human), this protein is Akirin-2.